Consider the following 37-residue polypeptide: Large ribosomal subunit protein bL36 (37 aa).

It belongs to the bacterial ribosomal protein bL36 family.

The chain is Large ribosomal subunit protein bL36 from Solibacter usitatus (strain Ellin6076).